The sequence spans 323 residues: Mycothiol acetyltransferase (323 aa).

2 N-acetyltransferase domains span residues 5–145 (LTTD…LPLR) and 168–323 (VEIR…PEER). Glu36 is a binding site for 1D-myo-inositol 2-(L-cysteinylamino)-2-deoxy-alpha-D-glucopyranoside. 83 to 85 (VAV) serves as a coordination point for acetyl-CoA. 1D-myo-inositol 2-(L-cysteinylamino)-2-deoxy-alpha-D-glucopyranoside-binding residues include Glu195, Lys236, and Glu252. Acetyl-CoA contacts are provided by residues 256-258 (VGV) and 263-269 (QGSGLGR). Tyr290 is a binding site for 1D-myo-inositol 2-(L-cysteinylamino)-2-deoxy-alpha-D-glucopyranoside. 295–300 (NRPAVQ) lines the acetyl-CoA pocket.

This sequence belongs to the acetyltransferase family. MshD subfamily. In terms of assembly, monomer.

It carries out the reaction 1D-myo-inositol 2-(L-cysteinylamino)-2-deoxy-alpha-D-glucopyranoside + acetyl-CoA = mycothiol + CoA + H(+). Its function is as follows. Catalyzes the transfer of acetyl from acetyl-CoA to desacetylmycothiol (Cys-GlcN-Ins) to form mycothiol. The polypeptide is Mycothiol acetyltransferase (Thermobifida fusca (strain YX)).